The chain runs to 314 residues: Ribosomal protein uL3 glutamine methyltransferase (314 aa).

Belongs to the protein N5-glutamine methyltransferase family. PrmB subfamily.

It carries out the reaction L-glutaminyl-[ribosomal protein uL3] + S-adenosyl-L-methionine = N(5)-methyl-L-glutaminyl-[ribosomal protein uL3] + S-adenosyl-L-homocysteine + H(+). In terms of biological role, methylates large ribosomal subunit protein uL3 on a specific glutamine residue. The polypeptide is Ribosomal protein uL3 glutamine methyltransferase (Shewanella oneidensis (strain ATCC 700550 / JCM 31522 / CIP 106686 / LMG 19005 / NCIMB 14063 / MR-1)).